We begin with the raw amino-acid sequence, 37 residues long: Cytochrome b6-f complex subunit 5 (37 aa).

A helical membrane pass occupies residues 5–25; sequence LLSGIILGLIPVTLSGLLVAA.

Belongs to the PetG family. In terms of assembly, the 4 large subunits of the cytochrome b6-f complex are cytochrome b6, subunit IV (17 kDa polypeptide, PetD), cytochrome f and the Rieske protein, while the 4 small subunits are PetG, PetL, PetM and PetN. The complex functions as a dimer.

It is found in the plastid. The protein resides in the chloroplast thylakoid membrane. In terms of biological role, component of the cytochrome b6-f complex, which mediates electron transfer between photosystem II (PSII) and photosystem I (PSI), cyclic electron flow around PSI, and state transitions. PetG is required for either the stability or assembly of the cytochrome b6-f complex. The polypeptide is Cytochrome b6-f complex subunit 5 (Porphyra purpurea (Red seaweed)).